The chain runs to 261 residues: Short-chain-enoyl-CoA hydratase (261 aa).

Glu-114 serves as the catalytic Nucleophile. Residue Glu-134 is the Proton acceptor of the active site.

Belongs to the enoyl-CoA hydratase/isomerase family. In terms of assembly, homotetramer.

The catalysed reaction is a short-chain (3S)-3-hydroxyacyl-CoA = a short-chain (2E)-enoyl-CoA + H2O. It functions in the pathway lipid metabolism; butanoate metabolism. Its function is as follows. Catalyzes the reversible hydration of crotonyl-CoA. Can also use hexenoyl-CoA but not higher analogs. The polypeptide is Short-chain-enoyl-CoA hydratase (crt) (Clostridium acetobutylicum (strain ATCC 824 / DSM 792 / JCM 1419 / IAM 19013 / LMG 5710 / NBRC 13948 / NRRL B-527 / VKM B-1787 / 2291 / W)).